A 257-amino-acid chain; its full sequence is Phosphonates import ATP-binding protein PhnC (257 aa).

The region spanning 2 to 246 (IEFRNVSKVY…KFAEIYGDVA (245 aa)) is the ABC transporter domain. ATP is bound at residue 35–42 (GLSGAGKS).

It belongs to the ABC transporter superfamily. Phosphonates importer (TC 3.A.1.9.1) family. As to quaternary structure, the complex is composed of two ATP-binding proteins (PhnC), two transmembrane proteins (PhnE) and a solute-binding protein (PhnD).

The protein resides in the cell membrane. The catalysed reaction is phosphonate(out) + ATP + H2O = phosphonate(in) + ADP + phosphate + H(+). Its function is as follows. Part of the ABC transporter complex PhnCDE involved in phosphonates import. Responsible for energy coupling to the transport system. This is Phosphonates import ATP-binding protein PhnC from Bacillus cereus (strain ATCC 14579 / DSM 31 / CCUG 7414 / JCM 2152 / NBRC 15305 / NCIMB 9373 / NCTC 2599 / NRRL B-3711).